The primary structure comprises 421 residues: Adenylosuccinate synthetase (421 aa).

GTP-binding positions include 11-17 (GDEGKGK) and 39-41 (GHT). D12 serves as the catalytic Proton acceptor. The Mg(2+) site is built by D12 and G39. IMP-binding positions include 12–15 (DEGK), 37–40 (NAGH), T129, R143, N219, T234, and R298. The active-site Proton donor is H40. Residue 294 to 300 (VTTGRRR) coordinates substrate. Residues R300, 326–328 (KLD), and 409–411 (GTG) each bind GTP.

It belongs to the adenylosuccinate synthetase family. Homodimer. Mg(2+) serves as cofactor.

The protein resides in the cytoplasm. The enzyme catalyses IMP + L-aspartate + GTP = N(6)-(1,2-dicarboxyethyl)-AMP + GDP + phosphate + 2 H(+). It functions in the pathway purine metabolism; AMP biosynthesis via de novo pathway; AMP from IMP: step 1/2. Functionally, plays an important role in the de novo pathway and in the salvage pathway of purine nucleotide biosynthesis. Catalyzes the first committed step in the biosynthesis of AMP from IMP. This is Adenylosuccinate synthetase from Paracoccidioides brasiliensis (strain Pb03).